The chain runs to 199 residues: Regulator of G-protein signaling 16 (199 aa).

Residues Cys2 and Cys12 are each lipidated (S-palmitoyl cysteine). The 117-residue stretch at Ser64–Ala180 folds into the RGS domain. Phosphotyrosine occurs at positions 167 and 176.

Interacts with GNAI1 and GNAQ. Interacts with GNAI3, GNAI3 and GNAO1. In terms of processing, palmitoylated on Cys-2 and/or Cys-12. Phosphorylated. Phosphorylation at Tyr-167 by EGFR enhances GTPase accelerating (GAP) activity toward GNAI1. As to expression, predominantly found in the retina. Some expression has been found in the liver.

The protein resides in the membrane. In terms of biological role, regulates G protein-coupled receptor signaling cascades. Inhibits signal transduction by increasing the GTPase activity of G protein alpha subunits, thereby driving them into their inactive GDP-bound form. Plays an important role in the phototransduction cascade by regulating the lifetime and effective concentration of activated transducin alpha. May regulate extra and intracellular mitogenic signals. This chain is Regulator of G-protein signaling 16 (Rgs16), found in Rattus norvegicus (Rat).